A 294-amino-acid chain; its full sequence is MASLKALKVRITSVKSTQKITKAMKMVAAAKLRRAQMAAEAGRPYAERLDAVMSSLASKVTVGPQSPKLLAGTGNDQVHLLVVATSERGLAGAFNTNIVRAARKTADSLIAQGKTVKFYLIGKKGRAVLQRLFPGKIVHQVDQSHIKNVAFSDAHMVAEDLIGRYSAGEFDVAHLFFAKFQSALVQEPTELQIIPVPLTADTGAAATGASAAVEYEPDEEAILTELLPRNVAVQLFRAMLENAASEQGSRMTAMDNATRNAGEMINKLTIQYNRTRQAAITTELIEIIAGAEAL.

The protein belongs to the ATPase gamma chain family. As to quaternary structure, F-type ATPases have 2 components, CF(1) - the catalytic core - and CF(0) - the membrane proton channel. CF(1) has five subunits: alpha(3), beta(3), gamma(1), delta(1), epsilon(1). CF(0) has three main subunits: a, b and c.

The protein localises to the cell inner membrane. In terms of biological role, produces ATP from ADP in the presence of a proton gradient across the membrane. The gamma chain is believed to be important in regulating ATPase activity and the flow of protons through the CF(0) complex. This is ATP synthase gamma chain from Rhizorhabdus wittichii (strain DSM 6014 / CCUG 31198 / JCM 15750 / NBRC 105917 / EY 4224 / RW1) (Sphingomonas wittichii).